Reading from the N-terminus, the 466-residue chain is Ribulose bisphosphate carboxylase large chain (466 aa).

An N6,N6,N6-trimethyllysine modification is found at Lys5. 2 residues coordinate substrate: Asn114 and Thr164. Lys166 acts as the Proton acceptor in catalysis. Lys168 is a binding site for substrate. Mg(2+)-binding residues include Lys192, Asp194, and Glu195. Lys192 is modified (N6-carboxylysine). Catalysis depends on His285, which acts as the Proton acceptor. Substrate is bound by residues Arg286, His318, and Ser370.

Belongs to the RuBisCO large chain family. Type I subfamily. As to quaternary structure, heterohexadecamer of 8 large chains and 8 small chains; disulfide-linked. The disulfide link is formed within the large subunit homodimers. The cofactor is Mg(2+). Post-translationally, the disulfide bond which can form in the large chain dimeric partners within the hexadecamer appears to be associated with oxidative stress and protein turnover.

It localises to the plastid. It is found in the chloroplast. It catalyses the reaction 2 (2R)-3-phosphoglycerate + 2 H(+) = D-ribulose 1,5-bisphosphate + CO2 + H2O. The enzyme catalyses D-ribulose 1,5-bisphosphate + O2 = 2-phosphoglycolate + (2R)-3-phosphoglycerate + 2 H(+). Its function is as follows. RuBisCO catalyzes two reactions: the carboxylation of D-ribulose 1,5-bisphosphate, the primary event in carbon dioxide fixation, as well as the oxidative fragmentation of the pentose substrate in the photorespiration process. Both reactions occur simultaneously and in competition at the same active site. The protein is Ribulose bisphosphate carboxylase large chain of Saururus cernuus (Lizard's tail).